The primary structure comprises 347 residues: Protein pelota homolog (347 aa).

This sequence belongs to the eukaryotic release factor 1 family. Pelota subfamily. Monomer. Requires a divalent metal cation as cofactor.

The protein resides in the cytoplasm. In terms of biological role, may function in recognizing stalled ribosomes, interact with stem-loop structures in stalled mRNA molecules, and effect endonucleolytic cleavage of the mRNA. May play a role in the release non-functional ribosomes and degradation of damaged mRNAs. Has endoribonuclease activity. This Methanothrix thermoacetophila (strain DSM 6194 / JCM 14653 / NBRC 101360 / PT) (Methanosaeta thermophila) protein is Protein pelota homolog.